Consider the following 228-residue polypeptide: Urease accessory protein UreF (228 aa).

Belongs to the UreF family. In terms of assembly, ureD, UreF and UreG form a complex that acts as a GTP-hydrolysis-dependent molecular chaperone, activating the urease apoprotein by helping to assemble the nickel containing metallocenter of UreC. The UreE protein probably delivers the nickel.

Its subcellular location is the cytoplasm. Its function is as follows. Required for maturation of urease via the functional incorporation of the urease nickel metallocenter. The sequence is that of Urease accessory protein UreF from Yersinia enterocolitica serotype O:8 / biotype 1B (strain NCTC 13174 / 8081).